A 101-amino-acid chain; its full sequence is Small ribosomal subunit protein uS14 (101 aa).

This sequence belongs to the universal ribosomal protein uS14 family. As to quaternary structure, part of the 30S ribosomal subunit. Contacts proteins S3 and S10.

In terms of biological role, binds 16S rRNA, required for the assembly of 30S particles and may also be responsible for determining the conformation of the 16S rRNA at the A site. In Pseudomonas syringae pv. syringae (strain B728a), this protein is Small ribosomal subunit protein uS14.